The primary structure comprises 325 residues: MAVENNTQRSYSIIPCFIFVELVIMAGTVLLAYYFECTDTFQVHIQGFFCQDGDLMKPYPGTEEESFISPLVLYCVLAATPTAIIFIGEISMYFIKSTRESLIAEEKMILTGDCCYLSPLLRRIVRFIGVFAFGLFATDIFVNAGQVVTGHLTPYFLTVCQPNYTSTDCRAHHQFINNGNICTGDLEVIEKARRSFPSKHAALSIYSALYATMYITSTIKTKSSRLAKPVLCLGDLCTAFLTGLNRVSEYRNHCSDVIAGFILGTAVALFLGMCVVHNFKGTQGSASKPKPEDPRGVPLMAFPRIESPLETLSAQNHSASMTEVT.

Asn-5 is a glycosylation site (N-linked (GlcNAc...) asparagine). Transmembrane regions (helical) follow at residues 13 to 33, 67 to 87, and 127 to 147; these read IIPCFIFVELVIMAGTVLLAY, FISPLVLYCVLAATPTAIIFI, and FIGVFAFGLFATDIFVNAGQV. N-linked (GlcNAc...) asparagine glycosylation occurs at Asn-163. Transmembrane regions (helical) follow at residues 201–219, 226–244, and 257–277; these read AALSIYSALYATMYITSTI, LAKPVLCLGDLCTAFLTGL, and VIAGFILGTAVALFLGMCVVH. Ser-307 is modified (phosphoserine). N-linked (GlcNAc...) asparagine glycosylation occurs at Asn-316.

It belongs to the PA-phosphatase related phosphoesterase family. In terms of tissue distribution, highly expressed in the brain. Also found in the liver, kidney and testis. In the brain shows a strongest expression in the hippocampus and cerebellum.

It is found in the cell membrane. It localises to the cell projection. The protein resides in the neuron projection. Its function is as follows. May play a role in neurite outgrowth and neurogenesis. This chain is Phospholipid phosphatase-related protein type 1, found in Rattus norvegicus (Rat).